Reading from the N-terminus, the 164-residue chain is Small ribosomal subunit protein uS5 (164 aa).

Residues 10 to 73 (LEERVVAINR…EAAKKNMIEV (64 aa)) enclose the S5 DRBM domain.

It belongs to the universal ribosomal protein uS5 family. In terms of assembly, part of the 30S ribosomal subunit. Contacts proteins S4 and S8.

With S4 and S12 plays an important role in translational accuracy. In terms of biological role, located at the back of the 30S subunit body where it stabilizes the conformation of the head with respect to the body. In Streptococcus pyogenes serotype M1, this protein is Small ribosomal subunit protein uS5.